The following is a 200-amino-acid chain: A-type ATP synthase subunit E (200 aa).

This sequence belongs to the V-ATPase E subunit family. In terms of assembly, has multiple subunits with at least A(3), B(3), C, D, E, F, H, I and proteolipid K(x).

It localises to the cell membrane. Component of the A-type ATP synthase that produces ATP from ADP in the presence of a proton gradient across the membrane. This is A-type ATP synthase subunit E from Aeropyrum pernix (strain ATCC 700893 / DSM 11879 / JCM 9820 / NBRC 100138 / K1).